The primary structure comprises 308 residues: Ornithine carbamoyltransferase (308 aa).

Residues Arg-103 and 130–133 (HPAQ) each bind carbamoyl phosphate. L-ornithine-binding positions include Asn-162, Asp-221, and 225 to 226 (SM). Residues 261-262 (CL) and Arg-289 contribute to the carbamoyl phosphate site.

This sequence belongs to the aspartate/ornithine carbamoyltransferase superfamily. OTCase family.

It is found in the cytoplasm. It catalyses the reaction carbamoyl phosphate + L-ornithine = L-citrulline + phosphate + H(+). The protein operates within amino-acid biosynthesis; L-arginine biosynthesis; L-arginine from L-ornithine and carbamoyl phosphate: step 1/3. In terms of biological role, reversibly catalyzes the transfer of the carbamoyl group from carbamoyl phosphate (CP) to the N(epsilon) atom of ornithine (ORN) to produce L-citrulline. The chain is Ornithine carbamoyltransferase from Deinococcus radiodurans (strain ATCC 13939 / DSM 20539 / JCM 16871 / CCUG 27074 / LMG 4051 / NBRC 15346 / NCIMB 9279 / VKM B-1422 / R1).